The primary structure comprises 175 residues: uncharacterized protein (175 aa).

Residues 1–11 (METWRKGSFRN) constitute a mitochondrion transit peptide. The disordered stretch occupies residues 29-48 (QGSILSQASTAGGDHEEYSN).

It is found in the mitochondrion. This is an uncharacterized protein from Mus musculus (Mouse).